We begin with the raw amino-acid sequence, 132 residues long: Small ribosomal subunit protein uS12 (132 aa).

D89 bears the 3-methylthioaspartic acid mark. The interval 103-132 (DTSGVADRRQSRSKYGAKQPKEGGAAKGKK) is disordered.

Belongs to the universal ribosomal protein uS12 family. In terms of assembly, part of the 30S ribosomal subunit. Contacts proteins S8 and S17. May interact with IF1 in the 30S initiation complex.

Its function is as follows. With S4 and S5 plays an important role in translational accuracy. Functionally, interacts with and stabilizes bases of the 16S rRNA that are involved in tRNA selection in the A site and with the mRNA backbone. Located at the interface of the 30S and 50S subunits, it traverses the body of the 30S subunit contacting proteins on the other side and probably holding the rRNA structure together. The combined cluster of proteins S8, S12 and S17 appears to hold together the shoulder and platform of the 30S subunit. This chain is Small ribosomal subunit protein uS12, found in Chlorobium phaeovibrioides (strain DSM 265 / 1930) (Prosthecochloris vibrioformis (strain DSM 265)).